A 589-amino-acid chain; its full sequence is ATP-dependent lipid A-core flippase (589 aa).

Transmembrane regions (helical) follow at residues 23–43, 60–80, 153–173, 249–269, and 272–292; these read WPIF…DAGF, LVFI…RGAA, VGLL…FLVI, VGTS…LFFA, and PSFH…IMML. An ABC transmembrane type-1 domain is found at 27–307; sequence LIGVVGMIAV…LTMVNSYIQK (281 aa). Residues 339 to 575 enclose the ABC transporter domain; that stretch reads IEYQGVSFAY…NGAYAELYRM (237 aa). 373 to 380 provides a ligand contact to ATP; it reads GRSGAGKS.

The protein belongs to the ABC transporter superfamily. Lipid exporter (TC 3.A.1.106) family. As to quaternary structure, homodimer.

The protein localises to the cell inner membrane. It catalyses the reaction ATP + H2O + lipid A-core oligosaccharideSide 1 = ADP + phosphate + lipid A-core oligosaccharideSide 2.. Its function is as follows. Involved in lipopolysaccharide (LPS) biosynthesis. Translocates lipid A-core from the inner to the outer leaflet of the inner membrane. Transmembrane domains (TMD) form a pore in the inner membrane and the ATP-binding domain (NBD) is responsible for energy generation. This Coxiella burnetii (strain RSA 493 / Nine Mile phase I) protein is ATP-dependent lipid A-core flippase.